A 555-amino-acid polypeptide reads, in one-letter code: Vacuolar fusion protein MON1 homolog A (555 aa).

Residues 1-12 (MAADMQRKRSSE) are compositionally biased toward basic and acidic residues. The tract at residues 1–87 (MAADMQRKRS…RGPPPLPADM (87 aa)) is disordered. Phosphoserine occurs at positions 31 and 56. Residue T61 is modified to Phosphothreonine. Residue S91 is modified to Phosphoserine. Residues 114–147 (PGSSEDWLDPPGAVGRPATEPPREGTAEGDEEDA) are disordered.

This sequence belongs to the MON1/SAND family. Interacts with CCZ1. Found in a complex with RMC1, CCZ1, MON1A and MON1B. The MON1A-CCZ1B complex interacts with RIMOC1. The MON1A-CCZ1B complex interacts with RAB7A and this interaction is enhanced in the presence of RIMOC1.

Plays an important role in membrane trafficking through the secretory apparatus. Not involved in endocytic trafficking to lysosomes. Acts in concert with CCZ1, as a guanine exchange factor (GEF) for RAB7, promotes the exchange of GDP to GTP, converting it from an inactive GDP-bound form into an active GTP-bound form. The chain is Vacuolar fusion protein MON1 homolog A (MON1A) from Macaca fascicularis (Crab-eating macaque).